The following is a 943-amino-acid chain: Translation initiation factor IF-2 (943 aa).

Residues 35–359 (MSSIDQDQEA…MPQRKERPLP (325 aa)) are disordered. The span at 57–76 (KAPSSQAAKTPAKAAKTSSA) shows a compositional bias: low complexity. Basic and acidic residues-rich tracts occupy residues 92–103 (SNDHADAAEHSQ) and 110–124 (AKQE…KTSD). Residues 130–141 (SKSTILRPRSTQ) show a composition bias toward polar residues. The segment covering 142 to 190 (TAHTNTNHNRGGNTASANNTANGRNSNRSNNNNNNRSANNANRSGNNNR) has biased composition (low complexity). 3 stretches are compositionally biased toward basic and acidic residues: residues 191–205 (SNER…RFDN), 239–250 (ASERQQPKRQEA), and 259–271 (KRSE…RPRT). Low complexity-rich tracts occupy residues 289–299 (PAAAAPKPASA) and 315–330 (NFGR…GFNR). The span at 331–342 (NNRRNKKNKRRQ) shows a compositional bias: basic residues. Residues 346–358 (PKKEMPQRKERPL) show a composition bias toward basic and acidic residues. The 170-residue stretch at 444–613 (PRPPVVTIMG…LLEADVLELK (170 aa)) folds into the tr-type G domain. A G1 region spans residues 453 to 460 (GHVDHGKT). GTP is bound at residue 453–460 (GHVDHGKT). The tract at residues 478-482 (GITQH) is G2. The interval 499-502 (DTPG) is G3. Residues 499 to 503 (DTPGH) and 553 to 556 (NKID) each bind GTP. A G4 region spans residues 553–556 (NKID). Positions 589 to 591 (SAK) are G5.

The protein belongs to the TRAFAC class translation factor GTPase superfamily. Classic translation factor GTPase family. IF-2 subfamily.

Its subcellular location is the cytoplasm. Functionally, one of the essential components for the initiation of protein synthesis. Protects formylmethionyl-tRNA from spontaneous hydrolysis and promotes its binding to the 30S ribosomal subunits. Also involved in the hydrolysis of GTP during the formation of the 70S ribosomal complex. The sequence is that of Translation initiation factor IF-2 from Lacticaseibacillus paracasei (strain ATCC 334 / BCRC 17002 / CCUG 31169 / CIP 107868 / KCTC 3260 / NRRL B-441) (Lactobacillus paracasei).